Reading from the N-terminus, the 1073-residue chain is Carbamoyl phosphate synthase large chain (1073 aa).

The tract at residues Pro-2–Glu-403 is carboxyphosphate synthetic domain. 12 residues coordinate ATP: Arg-129, Arg-169, Gly-175, Gly-176, Glu-208, Leu-210, Glu-215, Gly-241, Ile-242, His-243, Gln-285, and Glu-299. The 196-residue stretch at Asp-133–Val-328 folds into the ATP-grasp 1 domain. Gln-285, Glu-299, and Asn-301 together coordinate Mg(2+). The Mn(2+) site is built by Gln-285, Glu-299, and Asn-301. Residues Val-404–Ala-553 form an oligomerization domain region. The segment at Asn-554–Asn-936 is carbamoyl phosphate synthetic domain. The region spanning Gln-679 to Ala-870 is the ATP-grasp 2 domain. Arg-715, His-754, Leu-756, Glu-761, Gly-786, Val-787, His-788, Ser-789, Gln-829, and Glu-841 together coordinate ATP. Mg(2+) contacts are provided by Gln-829, Glu-841, and Asn-843. Mn(2+) is bound by residues Gln-829, Glu-841, and Asn-843. The MGS-like domain maps to Ser-937–Lys-1073. An allosteric domain region spans residues Ser-937–Lys-1073.

The protein belongs to the CarB family. In terms of assembly, composed of two chains; the small (or glutamine) chain promotes the hydrolysis of glutamine to ammonia, which is used by the large (or ammonia) chain to synthesize carbamoyl phosphate. Tetramer of heterodimers (alpha,beta)4. The cofactor is Mg(2+). Mn(2+) is required as a cofactor.

The catalysed reaction is hydrogencarbonate + L-glutamine + 2 ATP + H2O = carbamoyl phosphate + L-glutamate + 2 ADP + phosphate + 2 H(+). The enzyme catalyses hydrogencarbonate + NH4(+) + 2 ATP = carbamoyl phosphate + 2 ADP + phosphate + 2 H(+). The protein operates within amino-acid biosynthesis; L-arginine biosynthesis; carbamoyl phosphate from bicarbonate: step 1/1. Its pathway is pyrimidine metabolism; UMP biosynthesis via de novo pathway; (S)-dihydroorotate from bicarbonate: step 1/3. Its function is as follows. Large subunit of the glutamine-dependent carbamoyl phosphate synthetase (CPSase). CPSase catalyzes the formation of carbamoyl phosphate from the ammonia moiety of glutamine, carbonate, and phosphate donated by ATP, constituting the first step of 2 biosynthetic pathways, one leading to arginine and/or urea and the other to pyrimidine nucleotides. The large subunit (synthetase) binds the substrates ammonia (free or transferred from glutamine from the small subunit), hydrogencarbonate and ATP and carries out an ATP-coupled ligase reaction, activating hydrogencarbonate by forming carboxy phosphate which reacts with ammonia to form carbamoyl phosphate. The sequence is that of Carbamoyl phosphate synthase large chain from Escherichia coli O6:H1 (strain CFT073 / ATCC 700928 / UPEC).